The primary structure comprises 202 residues: LexA repressor (202 aa).

The H-T-H motif DNA-binding region spans 28 to 48 (RAEIAQRLGFRSPNAAEEHLK). Active-site for autocatalytic cleavage activity residues include serine 119 and lysine 156.

It belongs to the peptidase S24 family. As to quaternary structure, homodimer.

The enzyme catalyses Hydrolysis of Ala-|-Gly bond in repressor LexA.. Functionally, represses a number of genes involved in the response to DNA damage (SOS response), including recA and lexA. Binds to the 16 bp palindromic sequence 5'-CTGTATATATATACAG-3'. In the presence of single-stranded DNA, RecA interacts with LexA causing an autocatalytic cleavage which disrupts the DNA-binding part of LexA, leading to derepression of the SOS regulon and eventually DNA repair. In Klebsiella pneumoniae (strain 342), this protein is LexA repressor.